The following is a 610-amino-acid chain: Transducer of Cdc42-dependent actin assembly protein 2 homolog (610 aa).

The F-BAR domain maps to 1 to 267; the sequence is MIPVSRFFTV…EVGKIDAEGD (267 aa). The tract at residues 283–315 is disordered; that stretch reads APFEIEDLGDPKNCDSRTNDSADGSGGKLLKSS. Basic and acidic residues predominate over residues 291 to 302; that stretch reads GDPKNCDSRTND. Residues 352 to 429 enclose the REM-1 domain; the sequence is SKPAHVRLSC…IHNLKEFYAM (78 aa). The stretch at 355–385 forms a coiled coil; it reads AHVRLSCLRSKIRDMEKQLEQAIQGREGITR. Disordered regions lie at residues 436 to 487 and 499 to 519; these read EGQE…SSKN and LISS…RRAE. Basic and acidic residues predominate over residues 437–449; the sequence is GQERSFGGRDTPD. The segment covering 453-464 has biased composition (low complexity); the sequence is SMSGSSTNQSSS. The segment covering 475–487 has biased composition (polar residues); sequence AGNSSSADDSSKN. Positions 501–513 are enriched in low complexity; the sequence is SSPKTSKSSTPTP. The 64-residue stretch at 547–610 folds into the SH3 domain; that stretch reads ETAVTVTALF…VPTSYLQFPQ (64 aa).

The protein belongs to the FNBP1 family. As to quaternary structure, interacts (via SH3 domain) with wsp-1 and abi-1. Interacts with cdc-42 and (via SH3 domain) with wve-1.

Its subcellular location is the cell junction. It is found in the cell membrane. The protein resides in the cytoplasmic vesicle. The protein localises to the cytoplasm. It localises to the recycling endosome. Plays a role in protein trafficking, actin organization and embryonic morphogenesis. Potentially acts as a cdc-42 effector. May play a role in egg laying. Together with toca-1, is required for protein trafficking regulating yolk protein clathrin-mediated endocytosis by oocytes during oogenesis and retrograde recycling and the sorting of recycling endosome cargo proteins such as mig-14. Also, together with toca-2, controls the distribution of actin at cell junctions. The sequence is that of Transducer of Cdc42-dependent actin assembly protein 2 homolog from Caenorhabditis elegans.